The sequence spans 295 residues: MSMNENHDIQLVIITGMSGAGKTVAIQSFEDLGYFCVDNLPPSLLPKFLELMKESSSKMSKVALVMDLRGREFFDRLIEALDEMAENPWITPRILFLDAKDSILVTRYKETRRSHPLAATGLPLEGIALERQLLEELKGRSQLIYDTSDMKPRDLREKIVAHFATNQGETFTVNVMSFGFKYGLPIDADLVFDVRFLPNPFYIESMRPLTGKDEEVSSYVMKWNETQKFIEKLVDLLGFMLPSYKREGKSQLVIAIGCTGGQHRSVTLAEYLADYFKKDFYTHVTHRDIEKRSRK.

Residue 16–23 (GMSGAGKT) coordinates ATP. 67-70 (DLRG) is a binding site for GTP.

This sequence belongs to the RapZ-like family.

In terms of biological role, displays ATPase and GTPase activities. This chain is Nucleotide-binding protein RBAM_031990, found in Bacillus velezensis (strain DSM 23117 / BGSC 10A6 / LMG 26770 / FZB42) (Bacillus amyloliquefaciens subsp. plantarum).